A 464-amino-acid chain; its full sequence is UDP-N-acetylmuramate--L-alanine ligase (464 aa).

Position 117-123 (117-123 (GTHGKTT)) interacts with ATP.

This sequence belongs to the MurCDEF family.

It is found in the cytoplasm. It catalyses the reaction UDP-N-acetyl-alpha-D-muramate + L-alanine + ATP = UDP-N-acetyl-alpha-D-muramoyl-L-alanine + ADP + phosphate + H(+). Its pathway is cell wall biogenesis; peptidoglycan biosynthesis. Cell wall formation. The chain is UDP-N-acetylmuramate--L-alanine ligase from Streptomyces avermitilis (strain ATCC 31267 / DSM 46492 / JCM 5070 / NBRC 14893 / NCIMB 12804 / NRRL 8165 / MA-4680).